A 268-amino-acid polypeptide reads, in one-letter code: NH(3)-dependent NAD(+) synthetase (268 aa).

45–52 is an ATP binding site; that stretch reads GLSGGIDS. A Mg(2+)-binding site is contributed by D51. Deamido-NAD(+) is bound at residue R129. T149 lines the ATP pocket. Residue E154 participates in Mg(2+) binding. Deamido-NAD(+)-binding residues include K162 and D169. The ATP site is built by K178 and T200. 260-261 serves as a coordination point for deamido-NAD(+); it reads HK.

It belongs to the NAD synthetase family. Homodimer.

The catalysed reaction is deamido-NAD(+) + NH4(+) + ATP = AMP + diphosphate + NAD(+) + H(+). The protein operates within cofactor biosynthesis; NAD(+) biosynthesis; NAD(+) from deamido-NAD(+) (ammonia route): step 1/1. Functionally, catalyzes the ATP-dependent amidation of deamido-NAD to form NAD. Uses ammonia as a nitrogen source. The protein is NH(3)-dependent NAD(+) synthetase of Halobacterium salinarum (strain ATCC 29341 / DSM 671 / R1).